A 349-amino-acid polypeptide reads, in one-letter code: Small ribosomal subunit biogenesis GTPase RsgA (349 aa).

Over residues 1–11 the composition is skewed to basic residues; the sequence is MSKKKLSKGQQ. Positions 1–35 are disordered; sequence MSKKKLSKGQQRRVSANHQRRLKHADSKVEWDDSQ. The CP-type G domain occupies 111–272; it reads YDGLKPIAAN…VIDSPGVREF (162 aa). Residues 158–161 and 212–220 contribute to the GTP site; these read NKID and GQSGVGKSS. The Zn(2+) site is built by Cys-296, Cys-301, His-303, and Cys-309.

This sequence belongs to the TRAFAC class YlqF/YawG GTPase family. RsgA subfamily. As to quaternary structure, monomer. Associates with 30S ribosomal subunit, binds 16S rRNA. It depends on Zn(2+) as a cofactor.

It is found in the cytoplasm. Functionally, one of several proteins that assist in the late maturation steps of the functional core of the 30S ribosomal subunit. Helps release RbfA from mature subunits. May play a role in the assembly of ribosomal proteins into the subunit. Circularly permuted GTPase that catalyzes slow GTP hydrolysis, GTPase activity is stimulated by the 30S ribosomal subunit. The polypeptide is Small ribosomal subunit biogenesis GTPase RsgA (Dickeya dadantii (strain 3937) (Erwinia chrysanthemi (strain 3937))).